We begin with the raw amino-acid sequence, 186 residues long: UPF0200 protein Mbar_A0975 (186 aa).

8-15 (GMPASGKS) is an ATP binding site.

It belongs to the UPF0200 family.

The chain is UPF0200 protein Mbar_A0975 from Methanosarcina barkeri (strain Fusaro / DSM 804).